The sequence spans 336 residues: Phosphate acyltransferase (336 aa).

Belongs to the PlsX family. In terms of assembly, homodimer. Probably interacts with PlsY.

It is found in the cytoplasm. The enzyme catalyses a fatty acyl-[ACP] + phosphate = an acyl phosphate + holo-[ACP]. Its pathway is lipid metabolism; phospholipid metabolism. Catalyzes the reversible formation of acyl-phosphate (acyl-PO(4)) from acyl-[acyl-carrier-protein] (acyl-ACP). This enzyme utilizes acyl-ACP as fatty acyl donor, but not acyl-CoA. This is Phosphate acyltransferase from Pseudomonas putida (strain ATCC 47054 / DSM 6125 / CFBP 8728 / NCIMB 11950 / KT2440).